Reading from the N-terminus, the 121-residue chain is Transposase InsC for insertion element IS2A (121 aa).

The protein belongs to the transposase 8 family.

Functionally, involved in the transposition of the insertion sequence IS2. In Escherichia coli (strain K12), this protein is Transposase InsC for insertion element IS2A (insC1).